A 315-amino-acid polypeptide reads, in one-letter code: MDIPNTTATIATIPQAPAGFRSGFVAIVGRPNVGKSTLMNQLVGQKIAITSPVAQTTRNRLQGIITTPSSQIILLDTPGIHKPHHELGRVLVKNAIQAIHSVDLVVFLVDSSATLGRGDRFVVDLLQKTDGPVVVGLNKQDQQPPDQREELNASYETLTENHGWPCFKFSALTGEGLSNFQSALEARLDPGPYYYPPDLVTDQPERFIMAELIREQILLLTRQEVPHSVAIAIEKVEETPERTNVFAAITVERGSQKGIIIGQKGSMLQAIGTAARQQIQKLISGDVYLKLFVKVEPKWRQSRQQLLEFGYRVEE.

The region spanning 21–190 (RSGFVAIVGR…QSALEARLDP (170 aa)) is the Era-type G domain. The segment at 29 to 36 (GRPNVGKS) is G1. 29–36 (GRPNVGKS) provides a ligand contact to GTP. Positions 55-59 (QTTRN) are G2. A G3 region spans residues 76–79 (DTPG). GTP contacts are provided by residues 76–80 (DTPGI) and 138–141 (NKQD). The G4 stretch occupies residues 138 to 141 (NKQD). The G5 stretch occupies residues 169 to 171 (FSA). The 77-residue stretch at 221–297 (TRQEVPHSVA…YLKLFVKVEP (77 aa)) folds into the KH type-2 domain.

The protein belongs to the TRAFAC class TrmE-Era-EngA-EngB-Septin-like GTPase superfamily. Era GTPase family. As to quaternary structure, monomer.

Its subcellular location is the cytoplasm. The protein localises to the cell inner membrane. An essential GTPase that binds both GDP and GTP, with rapid nucleotide exchange. Plays a role in 16S rRNA processing and 30S ribosomal subunit biogenesis and possibly also in cell cycle regulation and energy metabolism. The chain is GTPase Era from Synechocystis sp. (strain ATCC 27184 / PCC 6803 / Kazusa).